The primary structure comprises 119 residues: Large ribosomal subunit protein bL20 (119 aa).

The protein belongs to the bacterial ribosomal protein bL20 family.

Functionally, binds directly to 23S ribosomal RNA and is necessary for the in vitro assembly process of the 50S ribosomal subunit. It is not involved in the protein synthesizing functions of that subunit. The sequence is that of Large ribosomal subunit protein bL20 from Rhodopseudomonas palustris (strain BisB5).